A 431-amino-acid chain; its full sequence is Serine--tRNA ligase (431 aa).

Threonine 237–glutamate 239 is an L-serine binding site. Arginine 268–glutamate 270 serves as a coordination point for ATP. Glutamate 291 is an L-serine binding site. Glutamate 355–serine 358 provides a ligand contact to ATP. Serine 390 lines the L-serine pocket.

The protein belongs to the class-II aminoacyl-tRNA synthetase family. Type-1 seryl-tRNA synthetase subfamily. Homodimer. The tRNA molecule binds across the dimer.

It is found in the cytoplasm. It catalyses the reaction tRNA(Ser) + L-serine + ATP = L-seryl-tRNA(Ser) + AMP + diphosphate + H(+). It carries out the reaction tRNA(Sec) + L-serine + ATP = L-seryl-tRNA(Sec) + AMP + diphosphate + H(+). Its pathway is aminoacyl-tRNA biosynthesis; selenocysteinyl-tRNA(Sec) biosynthesis; L-seryl-tRNA(Sec) from L-serine and tRNA(Sec): step 1/1. Functionally, catalyzes the attachment of serine to tRNA(Ser). Is also able to aminoacylate tRNA(Sec) with serine, to form the misacylated tRNA L-seryl-tRNA(Sec), which will be further converted into selenocysteinyl-tRNA(Sec). In Neisseria meningitidis serogroup C (strain 053442), this protein is Serine--tRNA ligase.